A 283-amino-acid polypeptide reads, in one-letter code: Glutamate racemase (283 aa).

Residues 28 to 29 (DS) and 60 to 61 (YG) contribute to the substrate site. Cys-92 acts as the Proton donor/acceptor in catalysis. Position 93–94 (93–94 (NT)) interacts with substrate. Residue Cys-204 is the Proton donor/acceptor of the active site. Substrate is bound at residue 205-206 (TH).

The protein belongs to the aspartate/glutamate racemases family.

The enzyme catalyses L-glutamate = D-glutamate. It functions in the pathway cell wall biogenesis; peptidoglycan biosynthesis. Provides the (R)-glutamate required for cell wall biosynthesis. This is Glutamate racemase from Klebsiella pneumoniae (strain 342).